The chain runs to 221 residues: MEPERLKFGGPRELCGAADLISQFKLVQHHEFFCKKSLPVSLSDSHYLHNVVGDTEIRKGEGMQLDQLIESISQSRETNIRIQPFDIDELQESFQLNDMTPVELPPAEKGAPTIPSKSKSESKDRDRKHKKHKDRDKDKDREHKKHKHKHKDRSKDKDKDKDRDRKKDKNGHHDSGDHSKKHHDKKRKHDGDEDLNDVQRHKKNKHKSSKLDEVGAIRVAG.

The tract at residues 101 to 221 (PVELPPAEKG…DEVGAIRVAG (121 aa)) is disordered. Basic residues predominate over residues 142–152 (EHKKHKHKHKD). Positions 153 to 178 (RSKDKDKDKDRDRKKDKNGHHDSGDH) are enriched in basic and acidic residues. The segment covering 179-188 (SKKHHDKKRK) has biased composition (basic residues).

The protein belongs to the plant Mediator complex subunit 19 family. Component of the Mediator complex. Interacts with FIB2.

The protein localises to the nucleus. Functionally, component of the Mediator complex, a coactivator involved in the regulated transcription of nearly all RNA polymerase II-dependent genes. Mediator functions as a bridge to convey information from gene-specific regulatory proteins to the basal RNA polymerase II transcription machinery. The Mediator complex, having a compact conformation in its free form, is recruited to promoters by direct interactions with regulatory proteins and serves for the assembly of a functional preinitiation complex with RNA polymerase II and the general transcription factors. This Arabidopsis thaliana (Mouse-ear cress) protein is Mediator of RNA polymerase II transcription subunit 19a (MED19A).